The following is a 71-amino-acid chain: Large ribosomal subunit protein bL31 (71 aa).

Zn(2+)-binding residues include Cys-16, Cys-18, Cys-37, and Cys-40.

It belongs to the bacterial ribosomal protein bL31 family. Type A subfamily. In terms of assembly, part of the 50S ribosomal subunit. Requires Zn(2+) as cofactor.

Binds the 23S rRNA. The sequence is that of Large ribosomal subunit protein bL31 from Serratia proteamaculans (strain 568).